A 187-amino-acid chain; its full sequence is Elongation factor P (187 aa).

The residue at position 33 (lysine 33) is an N6-(3,6-diaminohexanoyl)-5-hydroxylysine.

The protein belongs to the elongation factor P family. May be beta-lysylated on the epsilon-amino group of Lys-33 by the combined action of EpmA and EpmB, and then hydroxylated on the C5 position of the same residue by EpmC (if this protein is present). Lysylation is critical for the stimulatory effect of EF-P on peptide-bond formation. The lysylation moiety may extend toward the peptidyltransferase center and stabilize the terminal 3-CCA end of the tRNA. Hydroxylation of the C5 position on Lys-33 may allow additional potential stabilizing hydrogen-bond interactions with the P-tRNA.

The protein localises to the cytoplasm. The protein operates within protein biosynthesis; polypeptide chain elongation. Functionally, involved in peptide bond synthesis. Alleviates ribosome stalling that occurs when 3 or more consecutive Pro residues or the sequence PPG is present in a protein, possibly by augmenting the peptidyl transferase activity of the ribosome. Modification of Lys-33 is required for alleviation. The sequence is that of Elongation factor P from Blochmanniella floridana.